The sequence spans 196 residues: Pyridoxal 5'-phosphate synthase subunit PdxT (196 aa).

47-49 contacts L-glutamine; sequence GES. Cys79 acts as the Nucleophile in catalysis. L-glutamine contacts are provided by residues Arg106 and 134-135; that span reads IR. Residues His170 and Glu172 each act as charge relay system in the active site.

The protein belongs to the glutaminase PdxT/SNO family. As to quaternary structure, in the presence of PdxS, forms a dodecamer of heterodimers. Only shows activity in the heterodimer.

It carries out the reaction aldehydo-D-ribose 5-phosphate + D-glyceraldehyde 3-phosphate + L-glutamine = pyridoxal 5'-phosphate + L-glutamate + phosphate + 3 H2O + H(+). It catalyses the reaction L-glutamine + H2O = L-glutamate + NH4(+). It functions in the pathway cofactor biosynthesis; pyridoxal 5'-phosphate biosynthesis. Its function is as follows. Catalyzes the hydrolysis of glutamine to glutamate and ammonia as part of the biosynthesis of pyridoxal 5'-phosphate. The resulting ammonia molecule is channeled to the active site of PdxS. The sequence is that of Pyridoxal 5'-phosphate synthase subunit PdxT from Bacillus velezensis (strain DSM 23117 / BGSC 10A6 / LMG 26770 / FZB42) (Bacillus amyloliquefaciens subsp. plantarum).